The sequence spans 306 residues: Dermonecrotic toxin LiSicTox-alphaIA2bi (306 aa).

The signal sequence occupies residues 1–18 (MLPYIALILVCWSVLSQA). Residues 19-26 (AQTDVEGR) constitute a propeptide that is removed on maturation. The active site involves His-38. Residues Glu-58 and Asp-60 each contribute to the Mg(2+) site. The active-site Nucleophile is His-74. 2 cysteine pairs are disulfide-bonded: Cys-78/Cys-84 and Cys-80/Cys-223. Residue Asp-118 coordinates Mg(2+). Asn-283 carries N-linked (GlcNAc...) asparagine glycosylation.

It belongs to the arthropod phospholipase D family. Class II subfamily. It depends on Mg(2+) as a cofactor. As to expression, expressed by the venom gland.

It localises to the secreted. The catalysed reaction is an N-(acyl)-sphingosylphosphocholine = an N-(acyl)-sphingosyl-1,3-cyclic phosphate + choline. The enzyme catalyses an N-(acyl)-sphingosylphosphoethanolamine = an N-(acyl)-sphingosyl-1,3-cyclic phosphate + ethanolamine. It carries out the reaction a 1-acyl-sn-glycero-3-phosphocholine = a 1-acyl-sn-glycero-2,3-cyclic phosphate + choline. It catalyses the reaction a 1-acyl-sn-glycero-3-phosphoethanolamine = a 1-acyl-sn-glycero-2,3-cyclic phosphate + ethanolamine. Its function is as follows. Dermonecrotic toxins cleave the phosphodiester linkage between the phosphate and headgroup of certain phospholipids (sphingolipid and lysolipid substrates), forming an alcohol (often choline) and a cyclic phosphate. This toxin acts on sphingomyelin (SM). It may also act on ceramide phosphoethanolamine (CPE), lysophosphatidylcholine (LPC) and lysophosphatidylethanolamine (LPE), but not on lysophosphatidylserine (LPS), and lysophosphatidylglycerol (LPG). It acts by transphosphatidylation, releasing exclusively cyclic phosphate products as second products. Induces dermonecrosis, hemolysis, increased vascular permeability, edema, inflammatory response, and platelet aggregation. This chain is Dermonecrotic toxin LiSicTox-alphaIA2bi, found in Loxosceles intermedia (Brown spider).